A 118-amino-acid chain; its full sequence is Small ribosomal subunit protein uS13 (118 aa).

Positions 91 to 118 are disordered; sequence HRRGLPVRGQRTKTNARTRKGPRKPIKK.

This sequence belongs to the universal ribosomal protein uS13 family. Part of the 30S ribosomal subunit. Forms a loose heterodimer with protein S19. Forms two bridges to the 50S subunit in the 70S ribosome.

Located at the top of the head of the 30S subunit, it contacts several helices of the 16S rRNA. In the 70S ribosome it contacts the 23S rRNA (bridge B1a) and protein L5 of the 50S subunit (bridge B1b), connecting the 2 subunits; these bridges are implicated in subunit movement. Contacts the tRNAs in the A and P-sites. This chain is Small ribosomal subunit protein uS13, found in Serratia proteamaculans (strain 568).